Consider the following 122-residue polypeptide: Large ribosomal subunit protein uL14 (122 aa).

The protein belongs to the universal ribosomal protein uL14 family. Part of the 50S ribosomal subunit. Forms a cluster with proteins L3 and L19. In the 70S ribosome, L14 and L19 interact and together make contacts with the 16S rRNA in bridges B5 and B8.

Binds to 23S rRNA. Forms part of two intersubunit bridges in the 70S ribosome. The chain is Large ribosomal subunit protein uL14 from Helicobacter acinonychis (strain Sheeba).